Reading from the N-terminus, the 556-residue chain is Zinc finger protein 18 (556 aa).

In terms of domain architecture, SCAN box spans 41–123 (RQLFRQFRYQ…TLVESLKGEP (83 aa)). Residues 169–195 (QDLPLQNSSSATGELLSHGVKEESDME) are disordered. Residues 218–291 (ELGTAVLPPL…HLHGAEKMAR (74 aa)) enclose the KRAB domain. 5 C2H2-type zinc fingers span residues 415 to 437 (PTCRECGKTFYRNSQLVFHQRTH), 443 to 465 (FHCHICKKAFLRSSDFVKHQRTH), 471 to 493 (CKCDYCGKGFSDFSGLRHHEKIH), 499 to 521 (YKCPLCEKSFIQRSNFNRHQRVH), and 527 to 549 (YKCTHCGKQFSWSSSLDKHQRSH).

The protein belongs to the krueppel C2H2-type zinc-finger protein family.

Its subcellular location is the nucleus. Its function is as follows. May be involved in transcriptional regulation. The protein is Zinc finger protein 18 (Znf18) of Mus musculus (Mouse).